The chain runs to 448 residues: Arginine synthetase ArcE (448 aa).

As to quaternary structure, probably forms homotetramers and higher assemblies of tetramers. Mg(2+) serves as cofactor.

It catalyses the reaction L-arginine + ADP + phosphate + H(+) = L-citrulline + NH4(+) + ATP. Its pathway is amino-acid biosynthesis; L-proline biosynthesis. It functions in the pathway amino-acid degradation; L-arginine degradation. The protein operates within amino-acid biosynthesis; L-arginine biosynthesis. In terms of biological role, arginine deiminase involved in an arginine synthetase pathway, which provides citrulline and ornithine, the precursors for proline biosynthesis. Catalyzes the conversion of L-arginine to citrulline while conserving the energy of arginine deimination to generate ATP from ADP and free phosphate. Is specific toward L-arginine and cannot use D-arginine, agmatine, guanidine, L-alanine-L-arginine dipeptide and L-arginine-L-alanine dipeptide. Can also use CDP, GDP or UDP, with lower activity (38%, 8.4% and 13.3%, respectively). The enzyme can also catalyze the reverse reaction: the ATP-dependent generation of arginine from citrulline in a single reaction by using free ammonia, without the requirement of aspartic acid. In vivo, most likely functions in the arginine catabolism to produce citrulline for proline biosynthesis while also generating ATP, but it can also contribute to arginine biosynthesis when the necessary precursors such as citrulline are abundant. This Thermococcus kodakarensis (strain ATCC BAA-918 / JCM 12380 / KOD1) (Pyrococcus kodakaraensis (strain KOD1)) protein is Arginine synthetase ArcE.